Consider the following 24-residue polypeptide: Humanin-like 11 (24 aa).

It belongs to the humanin family.

The protein localises to the secreted. Its subcellular location is the cytoplasm. Functionally, plays a role as a neuroprotective and antiapoptotic factor. This is Humanin-like 11 from Homo sapiens (Human).